Reading from the N-terminus, the 511-residue chain is GMP synthase [glutamine-hydrolyzing] (511 aa).

The region spanning 5 to 195 (MILVLDFGGQ…LYNICGCKGD (191 aa)) is the Glutamine amidotransferase type-1 domain. The active-site Nucleophile is the cysteine 82. Catalysis depends on residues histidine 169 and glutamate 171. One can recognise a GMPS ATP-PPase domain in the interval 196-386 (WKMSSFVENS…LGIPEDLVWR (191 aa)). Position 223-229 (223-229 (SGGVDSS)) interacts with ATP.

Homodimer.

The enzyme catalyses XMP + L-glutamine + ATP + H2O = GMP + L-glutamate + AMP + diphosphate + 2 H(+). Its pathway is purine metabolism; GMP biosynthesis; GMP from XMP (L-Gln route): step 1/1. Functionally, catalyzes the synthesis of GMP from XMP. The protein is GMP synthase [glutamine-hydrolyzing] of Ruminiclostridium cellulolyticum (strain ATCC 35319 / DSM 5812 / JCM 6584 / H10) (Clostridium cellulolyticum).